The sequence spans 81 residues: Large ribosomal subunit protein bL31B (81 aa).

This sequence belongs to the bacterial ribosomal protein bL31 family. Type B subfamily. Part of the 50S ribosomal subunit.

This chain is Large ribosomal subunit protein bL31B, found in Pediococcus pentosaceus (strain ATCC 25745 / CCUG 21536 / LMG 10740 / 183-1w).